The primary structure comprises 870 residues: Leucine--tRNA ligase (870 aa).

The 'HIGH' region signature appears at 55-65 (PYPSGTLHMGH). A 'KMSKS' region motif is present at residues 626-630 (KMSKS). Lysine 629 provides a ligand contact to ATP.

The protein belongs to the class-I aminoacyl-tRNA synthetase family.

It localises to the cytoplasm. The enzyme catalyses tRNA(Leu) + L-leucine + ATP = L-leucyl-tRNA(Leu) + AMP + diphosphate. This chain is Leucine--tRNA ligase, found in Prochlorococcus marinus (strain SARG / CCMP1375 / SS120).